The primary structure comprises 729 residues: Fatty acid oxidation complex subunit alpha (729 aa).

Positions 1-189 (MLYKGDTLYL…KIGLVDGVVK (189 aa)) are enoyl-CoA hydratase/isomerase. A substrate-binding site is contributed by D296. The interval 311–729 (ETPKQAAVLG…ARPVGSLKTA (419 aa)) is 3-hydroxyacyl-CoA dehydrogenase. NAD(+) is bound by residues M324, D343, 400-402 (VVE), K407, and S429. The active-site For 3-hydroxyacyl-CoA dehydrogenase activity is the H450. NAD(+) is bound at residue N453. N500 and Y660 together coordinate substrate. The tract at residues 708–729 (RHNEPYYPPVEPARPVGSLKTA) is disordered.

It in the N-terminal section; belongs to the enoyl-CoA hydratase/isomerase family. The protein in the C-terminal section; belongs to the 3-hydroxyacyl-CoA dehydrogenase family. In terms of assembly, heterotetramer of two alpha chains (FadB) and two beta chains (FadA).

The enzyme catalyses a (3S)-3-hydroxyacyl-CoA + NAD(+) = a 3-oxoacyl-CoA + NADH + H(+). It carries out the reaction a (3S)-3-hydroxyacyl-CoA = a (2E)-enoyl-CoA + H2O. The catalysed reaction is a 4-saturated-(3S)-3-hydroxyacyl-CoA = a (3E)-enoyl-CoA + H2O. It catalyses the reaction (3S)-3-hydroxybutanoyl-CoA = (3R)-3-hydroxybutanoyl-CoA. The enzyme catalyses a (3Z)-enoyl-CoA = a 4-saturated (2E)-enoyl-CoA. It carries out the reaction a (3E)-enoyl-CoA = a 4-saturated (2E)-enoyl-CoA. It participates in lipid metabolism; fatty acid beta-oxidation. Functionally, involved in the aerobic and anaerobic degradation of long-chain fatty acids via beta-oxidation cycle. Catalyzes the formation of 3-oxoacyl-CoA from enoyl-CoA via L-3-hydroxyacyl-CoA. It can also use D-3-hydroxyacyl-CoA and cis-3-enoyl-CoA as substrate. In Salmonella typhimurium (strain LT2 / SGSC1412 / ATCC 700720), this protein is Fatty acid oxidation complex subunit alpha.